Reading from the N-terminus, the 96-residue chain is uncharacterized protein (96 aa).

The first 21 residues, 1–21, serve as a signal peptide directing secretion; sequence MLASVLILGAIAVGSAIPTIA.

This is an uncharacterized protein from Archaeoglobus fulgidus (strain ATCC 49558 / DSM 4304 / JCM 9628 / NBRC 100126 / VC-16).